Consider the following 733-residue polypeptide: 1,4-alpha-glucan branching enzyme GlgB (733 aa).

D412 acts as the Nucleophile in catalysis. The Proton donor role is filled by E467.

This sequence belongs to the glycosyl hydrolase 13 family. GlgB subfamily. In terms of assembly, monomer.

The enzyme catalyses Transfers a segment of a (1-&gt;4)-alpha-D-glucan chain to a primary hydroxy group in a similar glucan chain.. Its pathway is glycan biosynthesis; glycogen biosynthesis. Its function is as follows. Catalyzes the formation of the alpha-1,6-glucosidic linkages in glycogen by scission of a 1,4-alpha-linked oligosaccharide from growing alpha-1,4-glucan chains and the subsequent attachment of the oligosaccharide to the alpha-1,6 position. In Burkholderia vietnamiensis (strain G4 / LMG 22486) (Burkholderia cepacia (strain R1808)), this protein is 1,4-alpha-glucan branching enzyme GlgB.